The primary structure comprises 404 residues: Pleckstrin homology domain-containing family A member 1 (404 aa).

PH domains are found at residues 7-112 (QNRI…KAIK) and 191-289 (AVIK…GAIV). Disordered regions lie at residues 291-332 (QRGP…RSNS) and 355-404 (NFKV…VSDV). Residues 316 to 332 (TNAATATSHSTASRSNS) show a composition bias toward low complexity. Residues S332 and S362 each carry the phosphoserine modification.

As to quaternary structure, interacts with MPDZ and PTPN13. In terms of tissue distribution, highly expressed in skeletal muscle, thymus, pancreas, placenta and lung. Detected at low levels in brain, heart, peripheral blood leukocytes, testis, ovary, spinal cord, thyroid, kidney, liver, small intestine and colon.

The protein resides in the cytoplasm. It localises to the cell membrane. Its subcellular location is the nucleus. Binds specifically to phosphatidylinositol 3,4-diphosphate (PtdIns3,4P2), but not to other phosphoinositides. May recruit other proteins to the plasma membrane. This is Pleckstrin homology domain-containing family A member 1 (PLEKHA1) from Homo sapiens (Human).